Here is a 162-residue protein sequence, read N- to C-terminus: Malaria protein EXP-1 (162 aa).

A signal peptide spans 1-22 (MKILSVFFLVLFFIIFNKESLA). A helical transmembrane segment spans residues 80–101 (VLAGLLGVVSTVLLGGVGLVLY). Positions 109–162 (PFKIGSSDPADNANPDADSESNGEPNADPQVTAQDVTPEQPQGDDNNLVSGPEH) are disordered. Positions 114–130 (SSDPADNANPDADSESN) are enriched in low complexity. Residues 120 to 137 (NANPDADSESNGEPNADP) form an epitope (deduced) region. Positions 137 to 162 (PQVTAQDVTPEQPQGDDNNLVSGPEH) are enriched in polar residues.

Its subcellular location is the parasitophorous vacuole membrane. This Plasmodium falciparum protein is Malaria protein EXP-1 (EXP-1).